A 143-amino-acid polypeptide reads, in one-letter code: Small ribosomal subunit protein uS12 (143 aa).

The span at 1-20 shows a compositional bias: basic residues; that stretch reads MGKCRGLRTARKLRSHRRDH. Positions 1 to 26 are disordered; the sequence is MGKCRGLRTARKLRSHRRDHKWHDKQ. K37 participates in a covalent cross-link: Glycyl lysine isopeptide (Lys-Gly) (interchain with G-Cter in SUMO2). K54 bears the N6-succinyllysine mark. P62 is modified (3-hydroxyproline). Position 135 is an N6-acetyllysine (K135).

It belongs to the universal ribosomal protein uS12 family. In terms of assembly, component of the 40S small ribosomal subunit. Part of the small subunit (SSU) processome, composed of more than 70 proteins and the RNA chaperone small nucleolar RNA (snoRNA) U3. As to quaternary structure, (Microbial infection) Interacts with the African swine fever virus (ASFV) ubiquitin-conjugating enzyme UBCv1; this interaction probably plays a role in the viral regulation of host protein synthesis. Hydroxylation at Pro-62 affects translation termination efficiency.

Its subcellular location is the cytoplasm. The protein resides in the cytosol. It localises to the rough endoplasmic reticulum. It is found in the nucleus. The protein localises to the nucleolus. In terms of biological role, component of the ribosome, a large ribonucleoprotein complex responsible for the synthesis of proteins in the cell. The small ribosomal subunit (SSU) binds messenger RNAs (mRNAs) and translates the encoded message by selecting cognate aminoacyl-transfer RNA (tRNA) molecules. The large subunit (LSU) contains the ribosomal catalytic site termed the peptidyl transferase center (PTC), which catalyzes the formation of peptide bonds, thereby polymerizing the amino acids delivered by tRNAs into a polypeptide chain. The nascent polypeptides leave the ribosome through a tunnel in the LSU and interact with protein factors that function in enzymatic processing, targeting, and the membrane insertion of nascent chains at the exit of the ribosomal tunnel. Plays an important role in translational accuracy. Part of the small subunit (SSU) processome, first precursor of the small eukaryotic ribosomal subunit. During the assembly of the SSU processome in the nucleolus, many ribosome biogenesis factors, an RNA chaperone and ribosomal proteins associate with the nascent pre-rRNA and work in concert to generate RNA folding, modifications, rearrangements and cleavage as well as targeted degradation of pre-ribosomal RNA by the RNA exosome. The polypeptide is Small ribosomal subunit protein uS12 (RPS23) (Sus scrofa (Pig)).